Here is a 357-residue protein sequence, read N- to C-terminus: Protein NDRG2 (357 aa).

Over residues 1 to 14 the composition is skewed to basic and acidic residues; sequence MAELREVQITEEKP. The tract at residues 1-26 is disordered; the sequence is MAELREVQITEEKPLLPGQTPEVAKT. An N-acetylalanine modification is found at Ala2. Thr20 carries the phosphothreonine modification. Phosphoserine is present on residues Ser312 and Ser314. Residue Thr316 is modified to Phosphothreonine. At Ser318 the chain carries Phosphoserine. Thr320 is modified (phosphothreonine). Positions 320 to 357 are disordered; the sequence is TSAASIDGNRSRSRTLSQSSESGTLSSGPPGHTMEVSC. 3 positions are modified to phosphoserine: Ser321, Ser324, and Ser330. The span at 333–347 shows a compositional bias: low complexity; it reads RTLSQSSESGTLSSG. The residue at position 334 (Thr334) is a Phosphothreonine. 4 positions are modified to phosphoserine: Ser336, Ser338, Ser339, and Ser341. A Phosphothreonine modification is found at Thr343. Ser356 bears the Phosphoserine mark.

This sequence belongs to the NDRG family. In terms of assembly, interacts with CTNNB1.

It localises to the cytoplasm. The protein resides in the perinuclear region. It is found in the cell projection. Its subcellular location is the growth cone. Its function is as follows. Contributes to the regulation of the Wnt signaling pathway. Down-regulates CTNNB1-mediated transcriptional activation of target genes, such as CCND1, and may thereby act as tumor suppressor. May be involved in dendritic cell and neuron differentiation. This chain is Protein NDRG2 (NDRG2), found in Bos taurus (Bovine).